The sequence spans 289 residues: 4-diphosphocytidyl-2-C-methyl-D-erythritol kinase (289 aa).

The active site involves Lys16. Residue 99 to 109 (PMGGGIGGGSS) coordinates ATP. Residue Asp141 is part of the active site.

It belongs to the GHMP kinase family. IspE subfamily.

The catalysed reaction is 4-CDP-2-C-methyl-D-erythritol + ATP = 4-CDP-2-C-methyl-D-erythritol 2-phosphate + ADP + H(+). It participates in isoprenoid biosynthesis; isopentenyl diphosphate biosynthesis via DXP pathway; isopentenyl diphosphate from 1-deoxy-D-xylulose 5-phosphate: step 3/6. Catalyzes the phosphorylation of the position 2 hydroxy group of 4-diphosphocytidyl-2C-methyl-D-erythritol. The polypeptide is 4-diphosphocytidyl-2-C-methyl-D-erythritol kinase (Ralstonia nicotianae (strain ATCC BAA-1114 / GMI1000) (Ralstonia solanacearum)).